We begin with the raw amino-acid sequence, 187 residues long: Elongation factor P (187 aa).

Belongs to the elongation factor P family.

The protein resides in the cytoplasm. Its pathway is protein biosynthesis; polypeptide chain elongation. In terms of biological role, involved in peptide bond synthesis. Stimulates efficient translation and peptide-bond synthesis on native or reconstituted 70S ribosomes in vitro. Probably functions indirectly by altering the affinity of the ribosome for aminoacyl-tRNA, thus increasing their reactivity as acceptors for peptidyl transferase. This chain is Elongation factor P, found in Helicobacter pylori (strain P12).